We begin with the raw amino-acid sequence, 118 residues long: MLGAYLPILVLVAIAVIFGLCSLVFSSLIGQKKPSVVKLAPYECGCEPVGSARERFSVKFYIIAMLFILFDIEAVFLYPWSVLFKRLGMFGVMEMGVFIVILFVGYIYVWKKGALEWE.

Helical transmembrane passes span 5–25, 60–80, and 87–107; these read YLPILVLVAIAVIFGLCSLVF, FYIIAMLFILFDIEAVFLYPW, and LGMFGVMEMGVFIVILFVGYI.

Belongs to the complex I subunit 3 family. NDH-1 is composed of 14 different subunits. Subunits NuoA, H, J, K, L, M, N constitute the membrane sector of the complex.

The protein resides in the cell inner membrane. It catalyses the reaction a quinone + NADH + 5 H(+)(in) = a quinol + NAD(+) + 4 H(+)(out). Its function is as follows. NDH-1 shuttles electrons from NADH, via FMN and iron-sulfur (Fe-S) centers, to quinones in the respiratory chain. The immediate electron acceptor for the enzyme in this species is believed to be ubiquinone. Couples the redox reaction to proton translocation (for every two electrons transferred, four hydrogen ions are translocated across the cytoplasmic membrane), and thus conserves the redox energy in a proton gradient. The chain is NADH-quinone oxidoreductase subunit A 2 from Geobacter metallireducens (strain ATCC 53774 / DSM 7210 / GS-15).